Reading from the N-terminus, the 120-residue chain is NAD(P)H-quinone oxidoreductase subunit 3 (120 aa).

Transmembrane regions (helical) follow at residues 11–31 (LIFL…SYLI), 64–84 (MFAL…PWAV), and 89–109 (LGLL…VALV).

This sequence belongs to the complex I subunit 3 family. As to quaternary structure, NDH-1 can be composed of about 15 different subunits; different subcomplexes with different compositions have been identified which probably have different functions.

The protein resides in the cell inner membrane. It catalyses the reaction a plastoquinone + NADH + (n+1) H(+)(in) = a plastoquinol + NAD(+) + n H(+)(out). The enzyme catalyses a plastoquinone + NADPH + (n+1) H(+)(in) = a plastoquinol + NADP(+) + n H(+)(out). Functionally, NDH-1 shuttles electrons from an unknown electron donor, via FMN and iron-sulfur (Fe-S) centers, to quinones in the respiratory and/or the photosynthetic chain. The immediate electron acceptor for the enzyme in this species is believed to be plastoquinone. Couples the redox reaction to proton translocation, and thus conserves the redox energy in a proton gradient. Cyanobacterial NDH-1 also plays a role in inorganic carbon-concentration. This chain is NAD(P)H-quinone oxidoreductase subunit 3, found in Gloeobacter violaceus (strain ATCC 29082 / PCC 7421).